The sequence spans 411 residues: Protein translocase subunit SecY (411 aa).

Transmembrane regions (helical) follow at residues 13–33 (FTLLLLVLARLGIFIPVPGID), 52–72 (IFSGGGFSTIGIFALGIVPYI), 111–131 (ALGWATLQSGAISIWVKPYVF), 135–155 (FTFVCESVLALTAGSMIIMWL), 163–180 (GIGNGASLLIFQNIVSGL), 197–217 (SIKFGLFIVIFLLMIIITIFV), 252–272 (GVMPIVFASASMALPAYLTQL), 291–311 (LYLVLYSVLILFFSYFYTSIV), 350–370 (FLGATFLFTVALIPFIIEKVA), and 377–397 (GLGATSLLILVGVAIDTAKQI).

This sequence belongs to the SecY/SEC61-alpha family. In terms of assembly, component of the plastid Sec protein translocase complex, which is composed of at least SecY, SecE and SecG.

The protein resides in the plastid. It localises to the chloroplast thylakoid membrane. Functionally, the central subunit of the protein translocation channel SecYE. Consists of two halves formed by TMs 1-5 and 6-10. These two domains form a lateral gate at the front which open onto the bilayer between TMs 2 and 7, and are clamped together by SecE at the back. The channel is closed by both a pore ring composed of hydrophobic SecY resides and a short helix (helix 2A) on the extracellular side of the membrane which forms a plug. This is Protein translocase subunit SecY from Porphyra purpurea (Red seaweed).